The primary structure comprises 242 residues: Venom nerve growth factor 1 (242 aa).

The signal sequence occupies residues 1-18 (MSMLCYTLIIAFLIGIWA). Residues 19 to 125 (APQSEDNVPL…ALNRNIQAKR (107 aa)) constitute a propeptide that is removed on maturation. 3 disulfides stabilise this stretch: cysteine 139–cysteine 203, cysteine 181–cysteine 231, and cysteine 191–cysteine 233.

Belongs to the NGF-beta family. As to quaternary structure, homodimer; non-covalently linked. In terms of tissue distribution, expressed by the venom gland.

It is found in the secreted. In terms of biological role, nerve growth factor is important for the development and maintenance of the sympathetic and sensory nervous systems. It stimulates division and differentiation of sympathetic and embryonic sensory neurons as well as basal forebrain cholinergic neurons in the brain. Its relevance in the snake venom is not clear. However, it has been shown to inhibit metalloproteinase-dependent proteolysis of platelet glycoprotein Ib alpha, suggesting a metalloproteinase inhibition to prevent metalloprotease autodigestion and/or protection against prey proteases. Binds a lipid between the two protein chains in the homodimer. The lipid-bound form promotes histamine relase from mouse mast cells, contrary to the lipid-free form. The polypeptide is Venom nerve growth factor 1 (Pseudechis australis (Mulga snake)).